Consider the following 110-residue polypeptide: uncharacterized protein (110 aa).

The protein belongs to the RuBisCO large chain family.

Its subcellular location is the mitochondrion. This is an uncharacterized protein from Arabidopsis thaliana (Mouse-ear cress).